The following is a 305-amino-acid chain: N-acetylneuraminate lyase (305 aa).

Aceneuramate contacts are provided by Thr51 and Thr52. Tyr143 functions as the Proton donor in the catalytic mechanism. Lys173 functions as the Schiff-base intermediate with substrate in the catalytic mechanism. Thr175, Gly197, Asp199, Glu200, and Ser216 together coordinate aceneuramate.

It belongs to the DapA family. NanA subfamily. In terms of assembly, homotetramer.

It is found in the cytoplasm. The enzyme catalyses aceneuramate = aldehydo-N-acetyl-D-mannosamine + pyruvate. It participates in amino-sugar metabolism; N-acetylneuraminate degradation. Functionally, catalyzes the cleavage of N-acetylneuraminic acid (sialic acid) to form pyruvate and N-acetylmannosamine via a Schiff base intermediate. It prevents sialic acids from being recycled and returning to the cell surface. Involved in the N-glycolylneuraminic acid (Neu5Gc) degradation pathway. The protein is N-acetylneuraminate lyase of Xenopus tropicalis (Western clawed frog).